The following is a 146-amino-acid chain: Holo-[acyl-carrier-protein] synthase (146 aa).

Residues Asp8 and Glu61 each coordinate Mg(2+).

It belongs to the P-Pant transferase superfamily. AcpS family. Requires Mg(2+) as cofactor.

The protein resides in the cytoplasm. It catalyses the reaction apo-[ACP] + CoA = holo-[ACP] + adenosine 3',5'-bisphosphate + H(+). Its function is as follows. Transfers the 4'-phosphopantetheine moiety from coenzyme A to a Ser of acyl-carrier-protein. This Rhodopseudomonas palustris (strain ATCC BAA-98 / CGA009) protein is Holo-[acyl-carrier-protein] synthase.